The chain runs to 859 residues: Probable helicase A859L (859 aa).

Residues 178–349 form the Helicase ATP-binding domain; sequence YQELQRSGRA…KNRDLFGGVA (172 aa). Residue 191–198 participates in ATP binding; it reads MACRCGKT. Positions 298-301 match the DEAH box motif; the sequence is DECH. The Helicase C-terminal domain maps to 394-553; that stretch reads QIIMALAYLK…RFYEHLLNPS (160 aa).

The protein belongs to the asfivirus helicase A859L family.

In Ornithodoros (relapsing fever ticks), this protein is Probable helicase A859L.